The primary structure comprises 2014 residues: AP-1 accessory protein LAA1 (2014 aa).

Interacts with the clathrin-associated adapter complex AP-1. Interacts directly with LAA2.

It localises to the golgi apparatus. Its subcellular location is the cytoplasmic vesicle. It is found in the clathrin-coated vesicle. Functionally, involved in localization of clathrin adapter protein complex-1 (AP-1) and subsequent AP-1-mediated clathrin-coated vesicle cargo loading. In complex with LAA2, cooperates with the small GTPase ARF1 and the phosphatidyl-inositol-4-phosphate (PI4P) synthesis to confer temporal specificity to AP-1 recruitment. In Saccharomyces cerevisiae (strain ATCC 204508 / S288c) (Baker's yeast), this protein is AP-1 accessory protein LAA1.